The sequence spans 784 residues: Spindle pole body component alp4 (784 aa).

It belongs to the TUBGCP family. As to quaternary structure, part of the gamma-tubulin complex. Interacts with mcp6. Interacts with mto1. Interacts with mto2.

It localises to the cytoplasm. The protein resides in the cytoskeleton. It is found in the microtubule organizing center. The protein localises to the spindle pole body. Its function is as follows. Component of the gamma tubule complex that is required for the regulation of both interphase microtubules and mitotic bipolar spindles. This chain is Spindle pole body component alp4 (alp4), found in Schizosaccharomyces pombe (strain 972 / ATCC 24843) (Fission yeast).